A 321-amino-acid chain; its full sequence is MNRPERLQPGVKLRDADKVSRIPVKVVPSERDTMLRKPDWLRVKLPASNQRITDIKQALRKNGLHSVCEEASCPNLSECFNHGTATFMILGAICTRRCPFCDVAHGRPLKPDAEEPKKLAQTIKDMKLKYVVITSVDRDDLRDGGAQHFADCIREIRLLNPEIKIETLVPDFRGRIDAALEILATEPPDVFNHNLETAPMHYRKARPGANYQWSLDLLKKFKERHPNIPTKSGLMMGLGETNEEIAQVLHDLRAHNVEMLTLGQYLQPSKFHLPVERYVSPAEFDELKELAESIGFTHAACGPLVRSSYHADLQAQGKEVK.

[4Fe-4S] cluster-binding residues include Cys-68, Cys-73, Cys-79, Cys-94, Cys-98, Cys-101, and Ser-308. In terms of domain architecture, Radical SAM core spans 80-297 (FNHGTATFMI…KELAESIGFT (218 aa)).

The protein belongs to the radical SAM superfamily. Lipoyl synthase family. [4Fe-4S] cluster serves as cofactor.

Its subcellular location is the cytoplasm. It catalyses the reaction [[Fe-S] cluster scaffold protein carrying a second [4Fe-4S](2+) cluster] + N(6)-octanoyl-L-lysyl-[protein] + 2 oxidized [2Fe-2S]-[ferredoxin] + 2 S-adenosyl-L-methionine + 4 H(+) = [[Fe-S] cluster scaffold protein] + N(6)-[(R)-dihydrolipoyl]-L-lysyl-[protein] + 4 Fe(3+) + 2 hydrogen sulfide + 2 5'-deoxyadenosine + 2 L-methionine + 2 reduced [2Fe-2S]-[ferredoxin]. Its pathway is protein modification; protein lipoylation via endogenous pathway; protein N(6)-(lipoyl)lysine from octanoyl-[acyl-carrier-protein]: step 2/2. In terms of biological role, catalyzes the radical-mediated insertion of two sulfur atoms into the C-6 and C-8 positions of the octanoyl moiety bound to the lipoyl domains of lipoate-dependent enzymes, thereby converting the octanoylated domains into lipoylated derivatives. This chain is Lipoyl synthase, found in Shewanella pealeana (strain ATCC 700345 / ANG-SQ1).